The following is a 272-amino-acid chain: Granaticin polyketide synthase putative ketoacyl reductase 1 (272 aa).

21–45 (LVTGATSGIGLAIARRLAALGARTF) lines the NAD(+) pocket. Residue serine 155 participates in substrate binding. The Proton acceptor role is filled by tyrosine 168.

The protein belongs to the short-chain dehydrogenases/reductases (SDR) family.

The protein operates within antibiotic biosynthesis; granaticin biosynthesis. This chain is Granaticin polyketide synthase putative ketoacyl reductase 1 (gra-orf5), found in Streptomyces violaceoruber.